We begin with the raw amino-acid sequence, 521 residues long: Amidase (521 aa).

Residues Lys-96 and Ser-171 each act as charge relay system in the active site. The segment at 155-174 is disordered; that stretch reads SGPVRNPWDRQREAGGSSGG. Ser-195 acts as the Acyl-ester intermediate in catalysis.

It belongs to the amidase family. In terms of assembly, homodimer.

It catalyses the reaction a monocarboxylic acid amide + H2O = a monocarboxylate + NH4(+). Its function is as follows. Hydrolyzes propionamides efficiently, and also at a lower efficiency, acetamide, acrylamide and indoleacetamide. This enzyme seems to be stereospecific and can lead to the production of a single enantiomer. The chain is Amidase (amdA) from Rhodococcus erythropolis (Arthrobacter picolinophilus).